Reading from the N-terminus, the 197-residue chain is Large ribosomal subunit protein bL25 (197 aa).

It belongs to the bacterial ribosomal protein bL25 family. CTC subfamily. Part of the 50S ribosomal subunit; part of the 5S rRNA/L5/L18/L25 subcomplex. Contacts the 5S rRNA. Binds to the 5S rRNA independently of L5 and L18.

Its function is as follows. This is one of the proteins that binds to the 5S RNA in the ribosome where it forms part of the central protuberance. This Lawsonia intracellularis (strain PHE/MN1-00) protein is Large ribosomal subunit protein bL25.